A 279-amino-acid polypeptide reads, in one-letter code: Large ribosomal subunit protein uL2 (279 aa).

Disordered stretches follow at residues 32-58 (SLLT…GGGH) and 223-279 (GVAM…RKRG). 2 stretches are compositionally biased toward basic residues: residues 40-58 (KGGR…GGGH) and 269-279 (VRRRYATRKRG).

This sequence belongs to the universal ribosomal protein uL2 family. Part of the 50S ribosomal subunit. Forms a bridge to the 30S subunit in the 70S ribosome.

One of the primary rRNA binding proteins. Required for association of the 30S and 50S subunits to form the 70S ribosome, for tRNA binding and peptide bond formation. It has been suggested to have peptidyltransferase activity; this is somewhat controversial. Makes several contacts with the 16S rRNA in the 70S ribosome. This chain is Large ribosomal subunit protein uL2, found in Salinispora tropica (strain ATCC BAA-916 / DSM 44818 / JCM 13857 / NBRC 105044 / CNB-440).